The chain runs to 434 residues: Methylenetetrahydrofolate--tRNA-(uracil-5-)-methyltransferase TrmFO (434 aa).

FAD is bound at residue 9-14 (GAGLAG).

It belongs to the MnmG family. TrmFO subfamily. FAD serves as cofactor.

The protein resides in the cytoplasm. The enzyme catalyses uridine(54) in tRNA + (6R)-5,10-methylene-5,6,7,8-tetrahydrofolate + NADH + H(+) = 5-methyluridine(54) in tRNA + (6S)-5,6,7,8-tetrahydrofolate + NAD(+). It carries out the reaction uridine(54) in tRNA + (6R)-5,10-methylene-5,6,7,8-tetrahydrofolate + NADPH + H(+) = 5-methyluridine(54) in tRNA + (6S)-5,6,7,8-tetrahydrofolate + NADP(+). Its function is as follows. Catalyzes the folate-dependent formation of 5-methyl-uridine at position 54 (M-5-U54) in all tRNAs. The polypeptide is Methylenetetrahydrofolate--tRNA-(uracil-5-)-methyltransferase TrmFO (Listeria monocytogenes serovar 1/2a (strain ATCC BAA-679 / EGD-e)).